The following is a 255-amino-acid chain: Proteasome subunit alpha (255 aa).

It belongs to the peptidase T1A family. The 20S proteasome core is composed of 14 alpha and 14 beta subunits that assemble into four stacked heptameric rings, resulting in a barrel-shaped structure. The two inner rings, each composed of seven catalytic beta subunits, are sandwiched by two outer rings, each composed of seven alpha subunits. The catalytic chamber with the active sites is on the inside of the barrel. Has a gated structure, the ends of the cylinder being occluded by the N-termini of the alpha-subunits. Is capped at one or both ends by the proteasome regulatory ATPase, PAN.

It is found in the cytoplasm. The formation of the proteasomal ATPase PAN-20S proteasome complex, via the docking of the C-termini of PAN into the intersubunit pockets in the alpha-rings, triggers opening of the gate for substrate entry. Interconversion between the open-gate and close-gate conformations leads to a dynamic regulation of the 20S proteasome proteolysis activity. Functionally, component of the proteasome core, a large protease complex with broad specificity involved in protein degradation. The chain is Proteasome subunit alpha from Natronomonas pharaonis (strain ATCC 35678 / DSM 2160 / CIP 103997 / JCM 8858 / NBRC 14720 / NCIMB 2260 / Gabara) (Halobacterium pharaonis).